The chain runs to 784 residues: DNA repair and recombination protein RAD54-like (784 aa).

Residues 2–9 (RRSLAPSQ) form a required for chromatin remodeling, strand pairing activities and coupling of ATPase activity region. Position 22 is a phosphothreonine (Thr22). Residues 169 to 344 (EGKKGNFNGC…FSLVNFVNPE (176 aa)) enclose the Helicase ATP-binding domain. An ATP-binding site is contributed by 182-189 (DEMGLGKT). Residues 295–298 (DEGH) carry the DEGH box motif. Residues 501 to 658 (LLDFMLATIR…NNESAEKHFT (158 aa)) enclose the Helicase C-terminal domain. Residues 742–784 (QAIKESEETKQEAEDTSIPAKSKRKRSTTPESDDCNDEDFKGF) form a disordered region. Residues 745–754 (KESEETKQEA) are compositionally biased toward basic and acidic residues.

It belongs to the SNF2/RAD54 helicase family. As to quaternary structure, interacts (via N-terminus) with spn-A/Rad51.

The protein resides in the nucleus. Its function is as follows. Involved in mitotic DNA repair and meiotic recombination. Functions in the recombinational DNA repair pathway. Essential for interhomolog gene conversion (GC), but may have a less important role in intersister GC than spn-A/Rad51. In the presence of DNA, spn-A/Rad51 enhances the ATPase activity of okr/Rad54. In Drosophila willistoni (Fruit fly), this protein is DNA repair and recombination protein RAD54-like.